Reading from the N-terminus, the 725-residue chain is Kinesin-like protein KIF2C (725 aa).

N-acetylalanine is present on A2. Positions 2–254 are globular; the sequence is AMDSSLQARL…CHPLTMTDPI (253 aa). Phosphoserine is present on residues S6 and S22. The interval 89–116 is disordered; the sequence is QKQKRRSVNSKIPAPKESLRSRSTRMST. A Phosphoserine; by AURKB modification is found at S95. A Microtubule tip localization signal motif is present at residues 98 to 101; it reads SKIP. 8 positions are modified to phosphoserine: S106, S109, S111, S115, S166, S175, S187, and S192. The tract at residues 207–238 is negative regulator of microtubule-binding; it reads EKKAQNSEMRMKRAQEYDSSFPNWEFARMIKE. The Kinesin motor domain maps to 258-588; that stretch reads RICVCVRKRP…LRYADRVKEL (331 aa). Residues R264 and 348–355 each bind ATP; that span reads GQTGSGKT. The Nuclear localization signal signature appears at 415-418; it reads KKAK. Phosphoserine occurs at positions 519, 621, and 633. Positions 618-658 form a coiled coil; that stretch reads GNLSKEEEELSSQMSSFNEAMTQIRELEEKAMEELKEIIQQ.

The protein belongs to the TRAFAC class myosin-kinesin ATPase superfamily. Kinesin family. MCAK/KIF2 subfamily. Interacts with CENPH. Interacts with MTUS2/TIP150; the interaction is direct. Interacts with MAPRE1; the interaction is direct, regulated by phosphorylation and is probably required for targeting to growing microtubule plus ends. Interacts with KIF18B at microtubule tips; this interaction increases the affinity of both partners for microtubule plus ends and is required for robust microtubule depolymerization. Phosphorylation by AURKA or AURKB strongly reduces KIF18B-binding. Post-translationally, phosphorylation by AURKB, regulates association with centromeres and kinetochores and the microtubule depolymerization activity. In terms of processing, ubiquitinated. As to expression, expressed at high levels in thymus and testis, at low levels in small intestine, the mucosal lining of colon, and placenta, and at very low levels in spleen and ovary; expression is not detected in prostate, peripheral blood Leukocytes, heart, brain, lung, liver, skeletal muscle, kidney or pancreas. Isoform 2 is testis-specific.

Its subcellular location is the cytoplasm. The protein resides in the cytoskeleton. It localises to the nucleus. The protein localises to the chromosome. It is found in the centromere. Its subcellular location is the kinetochore. In complex with KIF18B, constitutes the major microtubule plus-end depolymerizing activity in mitotic cells. Regulates the turnover of microtubules at the kinetochore and functions in chromosome segregation during mitosis. Plays a role in chromosome congression and is required for the lateral to end-on conversion of the chromosome-microtubule attachment. The sequence is that of Kinesin-like protein KIF2C (KIF2C) from Homo sapiens (Human).